A 194-amino-acid chain; its full sequence is MPCLSAYLLMLSSWESSCLRLSQRLRASERYGAAFAPASEDPITLRAPVKGGARNVVGASWCIVCTFKPGVPREDWQLERVTKGILLAKVAPLSTTLEKREDCTGADEISGYSCKERSISSRFKTRQFRRYLPSLKPMRKYCTRSQSSRVNVRFVLSKRPGQRHIASTLSRHSHSPILPSRQVQSICPSNFLGR.

This is an uncharacterized protein from Tomato ringspot virus (isolate raspberry) (ToRSV).